Here is a 492-residue protein sequence, read N- to C-terminus: MAKFIMVVGTSSNSGKTVLVSGICRMLSNKGYKVAPFKSQNMSLNSRVSIEDGEIAVAQYTQAMAARAEPSIHFNPILLKPKGNFVSQVIVHGIPYEDRDYNEYRSKKDVLLEKIKESIEYLDKNYDYVVIEGAGSCCEINLLKDDIANLRIAEISGADAILVSDIDRGGVFAAIYGTVKLLPENWRKLLKGFVINKFRGNLDVLKDGFEKIEELTNIPVIGTIPYDETLILPEEDSQALEGKRVFGNVKSPIEVNIVKFSKIANFTDVDPLSSDCLMKYIDFNDDITGDILILPGTRCSTVEMDLMKKHGMDKKIMEFVENGGIVLGICGGYQTLGKILIDENFSEGDVGTISGLGLFDMETTFGNKKAIKNSTGTISIFDQNFDVMGYELHEGHSISNETPLISLSRGFGNCGDSYDGSFKVIGDSYIFGTYFHGILENFEFRNYLVNIVNNKKNLSRIENDNYAEIFNENMDKLSKLIEENLDLSKIIK.

In terms of domain architecture, GATase cobBQ-type spans 252–444 (PIEVNIVKFS…FHGILENFEF (193 aa)). Catalysis depends on Cys330, which acts as the Nucleophile. His436 is an active-site residue.

Belongs to the CobB/CobQ family. CobQ subfamily.

Its pathway is cofactor biosynthesis; adenosylcobalamin biosynthesis. In terms of biological role, catalyzes amidations at positions B, D, E, and G on adenosylcobyrinic A,C-diamide. NH(2) groups are provided by glutamine, and one molecule of ATP is hydrogenolyzed for each amidation. This Methanococcus maripaludis (strain C6 / ATCC BAA-1332) protein is Probable cobyric acid synthase.